The primary structure comprises 430 residues: MPSSPSSTTPAPTSTPAARREPSGKGPSGAAARLFLPLIALCTAVTAANIYLAAPLLPLIAHDMGSTPSAVAWLASVAQLGYAAGLLFFAPLGDSVNRRRLVAALSLVATAALLTAAASAGTGALAGAVLVASAATVVPQLLVPLVAERAPADRRARHVAAVIAGLFTGVVAARVLGGLAGQAFGWRAVFVGAAVLTAVLGLATAYILPVERRQRRGPLFAGLVAIPGLVRRSPDLWRACVRQAGMYGAWSALWTSLALLLTEGEGYGMTTAAAGLFGLFGLAASVVAPLAGGLVDRFGAAKVVRSAYALAALSVPLFWLGGQVMAALCAAAVLVHAALVASHVANQTLALTTTSAPATANTAYVVAGFAGGALASALAGPAFGHWGWGGVCAVAGAWLVLGWTATAVRPARSARSARSARSVRSVRSAR.

A compositionally biased stretch (low complexity) spans 1-17; the sequence is MPSSPSSTTPAPTSTPA. Positions 1–26 are disordered; it reads MPSSPSSTTPAPTSTPAARREPSGKG. 11 helical membrane-spanning segments follow: residues 34–54, 70–90, 101–121, 126–146, 159–179, 188–208, 244–264, 275–295, 315–335, 362–382, and 383–403; these read LFLP…YLAA, AVAW…LFFA, LVAA…ASAG, AGAV…VPLV, VAAV…LGGL, AVFV…AYIL, AGMY…LTEG, GLFG…GGLV, VPLF…AVLV, TAYV…AGPA, and FGHW…VLGW.

The protein belongs to the major facilitator superfamily.

The protein localises to the cell membrane. The chain is Probable transporter SCO4007 from Streptomyces coelicolor (strain ATCC BAA-471 / A3(2) / M145).